The following is a 772-amino-acid chain: Carnitine O-palmitoyltransferase 1, muscle isoform (772 aa).

Residues 1-47 (MAEAHQAVAFQFTVTPEGVDFRLSREALKHIYLSGINSWKKRLIRIK) are Cytoplasmic-facing. The chain crosses the membrane as a helical span at residues 48–73 (NGILRGVYPGSPTSWLVVASATAGSS). Over 74–102 (YYNVDISMGLVNHIQRCLPERYGPYWTPQ) the chain is Mitochondrial intermembrane. A helical transmembrane segment spans residues 103–122 (TRALLSMAVVSTGVWMIGIF). Topologically, residues 123–772 (FFRQTLKLLL…DLFQVPKTDS (650 aa)) are cytoplasmic. The active-site Proton acceptor is histidine 473. Residue 555-567 (GKGLIKKCRTSPD) participates in CoA binding. (R)-carnitine-binding residues include tyrosine 589 and threonine 602.

Belongs to the carnitine/choline acetyltransferase family.

It is found in the mitochondrion outer membrane. The enzyme catalyses (R)-carnitine + hexadecanoyl-CoA = O-hexadecanoyl-(R)-carnitine + CoA. It functions in the pathway lipid metabolism; fatty acid beta-oxidation. In terms of biological role, catalyzes the transfer of the acyl group of long-chain fatty acid-CoA conjugates onto carnitine, an essential step for the mitochondrial uptake of long-chain fatty acids and their subsequent beta-oxidation in the mitochondrion. The chain is Carnitine O-palmitoyltransferase 1, muscle isoform (CPT1B) from Sus scrofa (Pig).